Here is a 555-residue protein sequence, read N- to C-terminus: Urocanate hydratase (555 aa).

NAD(+)-binding positions include Gly-51 to Gly-52, Gln-129, Gly-175 to Gly-177, Glu-195, Gln-262 to His-266, Tyr-272 to Leu-273, and Tyr-321. Cys-409 is an active-site residue. Gly-491 lines the NAD(+) pocket.

This sequence belongs to the urocanase family. NAD(+) serves as cofactor.

The protein resides in the cytoplasm. It catalyses the reaction 4-imidazolone-5-propanoate = trans-urocanate + H2O. The protein operates within amino-acid degradation; L-histidine degradation into L-glutamate; N-formimidoyl-L-glutamate from L-histidine: step 2/3. Catalyzes the conversion of urocanate to 4-imidazolone-5-propionate. In Stenotrophomonas maltophilia (strain R551-3), this protein is Urocanate hydratase.